A 328-amino-acid chain; its full sequence is Probable D,D-dipeptide transport ATP-binding protein DdpD (328 aa).

One can recognise an ABC transporter domain in the interval 6–257 (LDIQQLHLSF…PRHPYTIGLL (252 aa)). An ATP-binding site is contributed by 42-49 (GESGSGKS).

The protein belongs to the ABC transporter superfamily. In terms of assembly, the complex is composed of two ATP-binding proteins (DdpD and DdpF), two transmembrane proteins (DdpB and DdpC) and a solute-binding protein (DdpA).

The protein resides in the cell inner membrane. Its function is as follows. Part of the ABC transporter complex DdpABCDF, which is probably involved in D,D-dipeptide transport. Probably responsible for energy coupling to the transport system. In Escherichia coli (strain K12), this protein is Probable D,D-dipeptide transport ATP-binding protein DdpD.